A 473-amino-acid polypeptide reads, in one-letter code: Aspartyl/glutamyl-tRNA(Asn/Gln) amidotransferase subunit B (473 aa).

Belongs to the GatB/GatE family. GatB subfamily. Heterotrimer of A, B and C subunits.

The catalysed reaction is L-glutamyl-tRNA(Gln) + L-glutamine + ATP + H2O = L-glutaminyl-tRNA(Gln) + L-glutamate + ADP + phosphate + H(+). The enzyme catalyses L-aspartyl-tRNA(Asn) + L-glutamine + ATP + H2O = L-asparaginyl-tRNA(Asn) + L-glutamate + ADP + phosphate + 2 H(+). Functionally, allows the formation of correctly charged Asn-tRNA(Asn) or Gln-tRNA(Gln) through the transamidation of misacylated Asp-tRNA(Asn) or Glu-tRNA(Gln) in organisms which lack either or both of asparaginyl-tRNA or glutaminyl-tRNA synthetases. The reaction takes place in the presence of glutamine and ATP through an activated phospho-Asp-tRNA(Asn) or phospho-Glu-tRNA(Gln). This chain is Aspartyl/glutamyl-tRNA(Asn/Gln) amidotransferase subunit B, found in Francisella tularensis subsp. tularensis (strain FSC 198).